A 250-amino-acid polypeptide reads, in one-letter code: Prolactin-7A2 (250 aa).

A signal peptide spans 1-29; the sequence is MQLSFSRPRPWTLLLMVVSNLLLWENVSS. N-linked (GlcNAc...) asparagine glycosylation is found at asparagine 26, asparagine 35, asparagine 102, and asparagine 134. Disulfide bonds link cysteine 100-cysteine 215 and cysteine 232-cysteine 241.

The protein belongs to the somatotropin/prolactin family. Expression restricted to placental tissues. Trophoblast giant cells are found to be the major source.

It is found in the secreted. The polypeptide is Prolactin-7A2 (Prl7a2) (Rattus norvegicus (Rat)).